The chain runs to 481 residues: DNA primase DnaG (481 aa).

A Toprim domain is found at 169 to 243; that stretch reads DAILVVEGRA…DVDYVARAPD (75 aa). Mg(2+) is bound by residues Glu-175, Asp-217, and Asp-219. Positions 275-393 are disordered; it reads RRRNKLAAQA…ARKEREPSEF (119 aa). Positions 281-309 are enriched in low complexity; sequence AAQAAEKQAQAEAAQKAEAPAAAAPVQPQ. The segment covering 312-393 has biased composition (basic and acidic residues); sequence YQQKEYPQRE…ARKEREPSEF (82 aa).

The protein belongs to the archaeal DnaG primase family. As to quaternary structure, forms a ternary complex with MCM helicase and DNA. Component of the archaeal exosome complex. Mg(2+) serves as cofactor.

The catalysed reaction is ssDNA + n NTP = ssDNA/pppN(pN)n-1 hybrid + (n-1) diphosphate.. Its function is as follows. RNA polymerase that catalyzes the synthesis of short RNA molecules used as primers for DNA polymerase during DNA replication. Also part of the exosome, which is a complex involved in RNA degradation. Acts as a poly(A)-binding protein that enhances the interaction between heteromeric, adenine-rich transcripts and the exosome. In Methanocella arvoryzae (strain DSM 22066 / NBRC 105507 / MRE50), this protein is DNA primase DnaG.